Reading from the N-terminus, the 585-residue chain is PiggyBac transposable element-derived protein 4 (585 aa).

The segment at 1 to 73 (MSNPRKRSIP…STSSDSGRSM (73 aa)) is disordered. A compositionally biased stretch (acidic residues) spans 25-40 (DSFDESDFSEIDDSDN). The span at 47–61 (EADKIRPLSHLESDG) shows a compositional bias: basic and acidic residues. Low complexity predominate over residues 62-72 (KSSTSSDSGRS).

The polypeptide is PiggyBac transposable element-derived protein 4 (PGBD4) (Homo sapiens (Human)).